The chain runs to 213 residues: Ras-related protein Rab-25 (213 aa).

GTP-binding residues include Ser-21, Gly-24, Lys-25, Thr-26, Asn-27, Ser-38, His-39, Thr-43, and Thr-44. A Mg(2+)-binding site is contributed by Thr-26. 2 short sequence motifs (switch) span residues 35 to 49 (NEFS…GVEF) and 67 to 84 (DTAG…YYRG). The Mg(2+) site is built by Thr-44 and Asp-67. The GTP site is built by Gly-70, Asn-125, Lys-126, Asp-128, Ala-156, and Leu-157. 2 S-geranylgeranyl cysteine lipidation sites follow: Cys-209 and Cys-210. Cys-210 carries the post-translational modification Cysteine methyl ester. A propeptide spans 211 to 213 (ISL) (removed in mature form).

This sequence belongs to the small GTPase superfamily. Rab family. In terms of assembly, interacts (GTP-bound form) with RAB11FIP1, RAB11FIP2, RAB11FIP3 and RAB11FIP4. Interacts (via the hypervariable C-terminal region) with ITGB1 (via the cytoplasmic region); the interaction is GTP-dependent. Interacts with ITGAV. Associates with the integrin alpha-V/beta-1 heterodimer. Interacts with VPS33B. Mg(2+) serves as cofactor. Expression is restricted to epithelial cells. Expressed in ovarian epithelium (NOE) and breast tissue. Expressed in ovarian cancer; expression is increased relative to NOE cells. Expression in ovarian cancer is stage dependent, with stage III and stage IV showing higher levels than early stage cancers. Expressed in breast cancer; expression is increased relative to normal breast tissue.

It is found in the cell membrane. The protein resides in the cytoplasmic vesicle. The protein localises to the cell projection. It localises to the pseudopodium membrane. The enzyme catalyses GTP + H2O = GDP + phosphate + H(+). With respect to regulation, regulated by guanine nucleotide exchange factors (GEFs) which promote the exchange of bound GDP for free GTP. Regulated by GTPase activating proteins (GAPs) which increase the GTP hydrolysis activity. Inhibited by GDP dissociation inhibitors (GDIs) which prevent Rab-GDP dissociation. In terms of biological role, the small GTPases Rab are key regulators of intracellular membrane trafficking, from the formation of transport vesicles to their fusion with membranes. Rabs cycle between an inactive GDP-bound form and an active GTP-bound form that is able to recruit to membranes different set of downstream effectors directly responsible for vesicle formation, movement, tethering and fusion. RAB25 regulates epithelial cell differentiation, proliferation and survival, thereby playing key roles in tumorigenesis. Promotes invasive migration of cells in which it functions to localize and maintain integrin alpha-V/beta-1 at the tips of extending pseudopodia. Involved in the regulation of epithelial morphogenesis through the control of CLDN4 expression and localization at tight junctions. May selectively regulate the apical recycling pathway. Together with MYO5B regulates transcytosis. This Homo sapiens (Human) protein is Ras-related protein Rab-25.